The primary structure comprises 109 residues: Cell division suppressor protein YneA (109 aa).

Residues 39–90 (SEVNVSEGDSLWALADQYAGKSDMAKADFVSWVEKENNLADGHVEAGESVVI) form the LysM domain.

The protein belongs to the YneA family.

The protein localises to the cytoplasm. Its function is as follows. Inhibits cell division during the SOS response. Affects a later stage of the cell division protein assembly, after the assembly of the Z ring, by probably suppressing recruitment of FtsL and/or DivIC to the division machinery. The sequence is that of Cell division suppressor protein YneA from Listeria monocytogenes serotype 4b (strain F2365).